Consider the following 245-residue polypeptide: tRNA1(Val) (adenine(37)-N6)-methyltransferase (245 aa).

This sequence belongs to the methyltransferase superfamily. tRNA (adenine-N(6)-)-methyltransferase family.

Its subcellular location is the cytoplasm. The enzyme catalyses adenosine(37) in tRNA1(Val) + S-adenosyl-L-methionine = N(6)-methyladenosine(37) in tRNA1(Val) + S-adenosyl-L-homocysteine + H(+). Specifically methylates the adenine in position 37 of tRNA(1)(Val) (anticodon cmo5UAC). The polypeptide is tRNA1(Val) (adenine(37)-N6)-methyltransferase (Escherichia coli (strain SE11)).